A 115-amino-acid chain; its full sequence is MNLMITLLTNTMLTSLMVLIAFWLPQTYNYSEKTSPYECGFDPVGSARLPFSMKFFLVAITFLLFDLEIALLLPLPWAIQANNTSLTLLMSFMLIILLAIGLAYEWLQKGLEWTK.

3 helical membrane-spanning segments follow: residues 3-23 (LMIT…IAFW), 55-75 (FFLV…LLPL), and 86-106 (LTLL…AYEW).

Belongs to the complex I subunit 3 family. In terms of assembly, core subunit of respiratory chain NADH dehydrogenase (Complex I) which is composed of 45 different subunits. Interacts with TMEM186. Interacts with TMEM242.

It is found in the mitochondrion inner membrane. It catalyses the reaction a ubiquinone + NADH + 5 H(+)(in) = a ubiquinol + NAD(+) + 4 H(+)(out). Its function is as follows. Core subunit of the mitochondrial membrane respiratory chain NADH dehydrogenase (Complex I) which catalyzes electron transfer from NADH through the respiratory chain, using ubiquinone as an electron acceptor. Essential for the catalytic activity of complex I. The polypeptide is NADH-ubiquinone oxidoreductase chain 3 (Loxodonta africana (African elephant)).